Reading from the N-terminus, the 404-residue chain is Methyltransferase-like protein 22 (404 aa).

2 disordered regions span residues 60 to 102 (TDSG…SLQA) and 115 to 145 (QLDE…DKVH). The span at 68 to 78 (SHRDVHTKEPP) shows a compositional bias: basic and acidic residues. A compositionally biased stretch (low complexity) spans 79-88 (SAETGSTGSP). The residue at position 132 (serine 132) is a Phosphoserine.

It belongs to the methyltransferase superfamily. METTL22 family. Interacts with members of the heat shock protein 90 and 70 families; these proteins probably are methylation substrates.

It localises to the nucleus. The enzyme catalyses L-lysyl-[protein] + 3 S-adenosyl-L-methionine = N(6),N(6),N(6)-trimethyl-L-lysyl-[protein] + 3 S-adenosyl-L-homocysteine + 3 H(+). In terms of biological role, protein N-lysine methyltransferase. Trimethylates KIN at Lys-135 (in vitro). This is Methyltransferase-like protein 22 (METTL22) from Homo sapiens (Human).